Reading from the N-terminus, the 334-residue chain is Kihadalactone A synthase LFS (334 aa).

Residues 181 to 286 form the Fe2OG dioxygenase domain; the sequence is KTASYSNMFH…RYSTGLFLCP (106 aa). The Fe cation site is built by H208, D210, and H269. Residue R277 participates in 2-oxoglutarate binding.

It belongs to the iron/ascorbate-dependent oxidoreductase family. The cofactor is Fe(2+). Expressed in maturing fruits and in juice vesicles.

The catalysed reaction is (1R,2R,3S,8R,10R,11R,15S,16S)-3-(acetyloxy)-15-(1-hydroxy-4-oxobutan-2-yl)-2,7,7,11,16-pentamethyl-5-oxo-6-oxatetracyclo[9.7.0.0(2,8).0(12,16)]octadec-12-en-10-yl acetate + 2-oxoglutarate + O2 = kihadalactone A + succinate + CO2 + 2 H2O. Its pathway is secondary metabolite biosynthesis; terpenoid biosynthesis. Its function is as follows. 2-oxoglutarate-Fe(II) type oxidoreductase involved in the biosynthesis of limonoids triterpene natural products such as limonin, a compound with insecticidal activity responsible for the bitter taste in citrus. Catalyzes the formation of kihadalactone A. The sequence is that of Kihadalactone A synthase LFS from Citrus sinensis (Sweet orange).